A 359-amino-acid polypeptide reads, in one-letter code: DNA polymerase IV (359 aa).

One can recognise a UmuC domain in the interval I4–G184. Residues D8 and D102 each coordinate Mg(2+). Residue E103 is part of the active site.

The protein belongs to the DNA polymerase type-Y family. Monomer. Mg(2+) is required as a cofactor.

Its subcellular location is the cytoplasm. It catalyses the reaction DNA(n) + a 2'-deoxyribonucleoside 5'-triphosphate = DNA(n+1) + diphosphate. Poorly processive, error-prone DNA polymerase involved in untargeted mutagenesis. Copies undamaged DNA at stalled replication forks, which arise in vivo from mismatched or misaligned primer ends. These misaligned primers can be extended by PolIV. Exhibits no 3'-5' exonuclease (proofreading) activity. May be involved in translesional synthesis, in conjunction with the beta clamp from PolIII. This chain is DNA polymerase IV, found in Xanthomonas euvesicatoria pv. vesicatoria (strain 85-10) (Xanthomonas campestris pv. vesicatoria).